The sequence spans 189 residues: Segregation and condensation protein B (189 aa).

This sequence belongs to the ScpB family. Homodimer. Homodimerization may be required to stabilize the binding of ScpA to the Smc head domains. Component of a cohesin-like complex composed of ScpA, ScpB and the Smc homodimer, in which ScpA and ScpB bind to the head domain of Smc. The presence of the three proteins is required for the association of the complex with DNA.

It is found in the cytoplasm. Its function is as follows. Participates in chromosomal partition during cell division. May act via the formation of a condensin-like complex containing Smc and ScpA that pull DNA away from mid-cell into both cell halves. The protein is Segregation and condensation protein B of Streptococcus mitis.